We begin with the raw amino-acid sequence, 638 residues long: 3D-(3,5/4)-trihydroxycyclohexane-1,2-dione hydrolase (638 aa).

Residue E67 participates in thiamine diphosphate binding. The segment at 442–523 (SLPGDLQRLW…INIMLFDNSG (82 aa)) is thiamine pyrophosphate binding. Mg(2+) is bound by residues D494 and N521.

This sequence belongs to the TPP enzyme family. Requires Mg(2+) as cofactor. Thiamine diphosphate is required as a cofactor.

The catalysed reaction is 3D-3,5/4-trihydroxycyclohexane-1,2-dione + H2O = 5-deoxy-D-glucuronate + H(+). It participates in polyol metabolism; myo-inositol degradation into acetyl-CoA; acetyl-CoA from myo-inositol: step 3/7. Functionally, involved in the cleavage of the C1-C2 bond of 3D-(3,5/4)-trihydroxycyclohexane-1,2-dione (THcHDO) to yield 5-deoxy-glucuronate (5DG). In Listeria monocytogenes serovar 1/2a (strain ATCC BAA-679 / EGD-e), this protein is 3D-(3,5/4)-trihydroxycyclohexane-1,2-dione hydrolase.